We begin with the raw amino-acid sequence, 394 residues long: Queuine tRNA-ribosyltransferase accessory subunit 2 (394 aa).

Zn(2+) contacts are provided by C336, C338, C341, and H367.

This sequence belongs to the queuine tRNA-ribosyltransferase family. QTRT2 subfamily. As to quaternary structure, heterodimer of a catalytic subunit and an accessory subunit. Zn(2+) is required as a cofactor.

It localises to the cytoplasm. In terms of biological role, non-catalytic subunit of the queuine tRNA-ribosyltransferase (TGT) that catalyzes the base-exchange of a guanine (G) residue with queuine (Q) at position 34 (anticodon wobble position) in tRNAs with GU(N) anticodons (tRNA-Asp, -Asn, -His and -Tyr), resulting in the hypermodified nucleoside queuosine (7-(((4,5-cis-dihydroxy-2-cyclopenten-1-yl)amino)methyl)-7-deazaguanosine). The polypeptide is Queuine tRNA-ribosyltransferase accessory subunit 2 (Ixodes scapularis (Black-legged tick)).